We begin with the raw amino-acid sequence, 461 residues long: Photosystem II CP43 reaction center protein (461 aa).

Positions 1-2 (ME) are excised as a propeptide. Thr3 carries the N-acetylthreonine modification. The residue at position 3 (Thr3) is a Phosphothreonine. The next 5 membrane-spanning stretches (helical) occupy residues 57–81 (LFEVAHFVPEKPMYEQGLILLPHLA), 122–143 (LLGPETLEESFPFFGYVWKDRN), 166–188 (KALYFGGVYDTWAPGGGDVRKIS), 243–263 (KPFAWARRALVWSGEAYLSYS), and 279–300 (WFNNTAYPSEFYGPTGPEASQA). Glu355 is a binding site for [CaMn4O5] cluster. Residues 435–459 (RARAAAAGFEKGIDRDFEPVLSMTP) traverse the membrane as a helical segment.

Belongs to the PsbB/PsbC family. PsbC subfamily. In terms of assembly, PSII is composed of 1 copy each of membrane proteins PsbA, PsbB, PsbC, PsbD, PsbE, PsbF, PsbH, PsbI, PsbJ, PsbK, PsbL, PsbM, PsbT, PsbX, PsbY, PsbZ, Psb30/Ycf12, at least 3 peripheral proteins of the oxygen-evolving complex and a large number of cofactors. It forms dimeric complexes. Binds multiple chlorophylls and provides some of the ligands for the Ca-4Mn-5O cluster of the oxygen-evolving complex. It may also provide a ligand for a Cl- that is required for oxygen evolution. PSII binds additional chlorophylls, carotenoids and specific lipids. is required as a cofactor.

It localises to the plastid. The protein localises to the chloroplast thylakoid membrane. In terms of biological role, one of the components of the core complex of photosystem II (PSII). It binds chlorophyll and helps catalyze the primary light-induced photochemical processes of PSII. PSII is a light-driven water:plastoquinone oxidoreductase, using light energy to abstract electrons from H(2)O, generating O(2) and a proton gradient subsequently used for ATP formation. This is Photosystem II CP43 reaction center protein from Trachelium caeruleum (Blue throatwort).